The primary structure comprises 634 residues: Pentatricopeptide repeat-containing protein At5g14080 (634 aa).

PPR repeat units lie at residues 81-115 (DSIS…KILL), 116-150 (DSSV…GQEI), 151-185 (HPDV…GVSL), 186-220 (NTLG…NLNI), 222-256 (GSII…DCKP), 257-291 (DFMA…GVAP), 292-326 (RSSD…KFPM), 327-360 (DNDI…GKLP), 361-395 (AIRT…GYFS), 396-430 (ELQS…GLAP), 431-465 (DVSL…GCKM), 466-500 (NLTT…GIEP), and 501-535 (DETI…DHKT).

Belongs to the PPR family. P subfamily.

The sequence is that of Pentatricopeptide repeat-containing protein At5g14080 from Arabidopsis thaliana (Mouse-ear cress).